Consider the following 307-residue polypeptide: Myeloid-associated differentiation marker-like protein 2 (307 aa).

MARVEL domains follow at residues 17-154 and 159-303; these read AVTS…ARPG and YMAT…RIRF. Transmembrane regions (helical) follow at residues 53-73, 90-110, 129-149, 163-183, 198-218, 232-252, and 278-298; these read FCMA…ACEF, AFAM…PLYF, LAAS…VALT, VSGL…GALV, VAVY…SVMG, VVYT…WPVF, and LVVA…LAYS.

It belongs to the MAL family.

Its subcellular location is the membrane. The sequence is that of Myeloid-associated differentiation marker-like protein 2 (Myadml2) from Rattus norvegicus (Rat).